The primary structure comprises 199 residues: Holliday junction branch migration complex subunit RuvA (199 aa).

Residues 1–64 (MIALLTGKLA…EDAINLYGFR (64 aa)) form a domain I region. Positions 65 to 143 (TMEEKEMFQL…KLGHGPLQQD (79 aa)) are domain II. Residues 144–148 (VAPAD) are flexible linker. The segment at 149 to 199 (AHNDMRDDVVSALVNLGYKEAVVQKTVDEIGVAADATVESLLKQALKKLMK) is domain III.

Belongs to the RuvA family. In terms of assembly, homotetramer. Forms an RuvA(8)-RuvB(12)-Holliday junction (HJ) complex. HJ DNA is sandwiched between 2 RuvA tetramers; dsDNA enters through RuvA and exits via RuvB. An RuvB hexamer assembles on each DNA strand where it exits the tetramer. Each RuvB hexamer is contacted by two RuvA subunits (via domain III) on 2 adjacent RuvB subunits; this complex drives branch migration. In the full resolvosome a probable DNA-RuvA(4)-RuvB(12)-RuvC(2) complex forms which resolves the HJ.

Its subcellular location is the cytoplasm. Functionally, the RuvA-RuvB-RuvC complex processes Holliday junction (HJ) DNA during genetic recombination and DNA repair, while the RuvA-RuvB complex plays an important role in the rescue of blocked DNA replication forks via replication fork reversal (RFR). RuvA specifically binds to HJ cruciform DNA, conferring on it an open structure. The RuvB hexamer acts as an ATP-dependent pump, pulling dsDNA into and through the RuvAB complex. HJ branch migration allows RuvC to scan DNA until it finds its consensus sequence, where it cleaves and resolves the cruciform DNA. This Geotalea daltonii (strain DSM 22248 / JCM 15807 / FRC-32) (Geobacter daltonii) protein is Holliday junction branch migration complex subunit RuvA.